The chain runs to 68 residues: Large ribosomal subunit protein uL29 (68 aa).

The protein belongs to the universal ribosomal protein uL29 family.

The protein is Large ribosomal subunit protein uL29 of Streptococcus suis (strain 98HAH33).